Reading from the N-terminus, the 729-residue chain is MSGWDEGAVFYSDQAQFPRGGPGGDPSADLTRHSALRKFKEFLRGFTGPTGDFPYRESLVHNRDHVTVAIEDLDAFDAELSDKIRKSPADYLPLFETAASEVLASLRSKVAGETGEMEEPASGDVQIFLSSKENCLSMRSIGADYMSKLVKIAGITIAASRVKAKATHVTLLCKNCRSVKTVPCRPGLGGAIVPRSCDHVPQPGEEPCPLDPWIAVPDKSKYVDLQTLKLQENPEDVPTGELPRNMLLSVDRHLVQTIVPGTRLTVIGIYSVYQASANQKGAVGVKQPYIRVVGLEQSRDANSNGPSNFTLDEEMEFKEFAQRPDAYVKICSMIGPSIYGHSDVKKAIACLLFGGSKKRLPDGVRLRGDIHVLLLGDPSTAKSQFLKFVEKTAPIAVYTSGKGSSAAGLTASVIRDGSSREFYLEGGAMVLADGGVVCIDEFDKMRPEDRVAIHEAMEQQTISIAKAGITTVLNSRTSVLAAANPIAGRYDDLKTAQDNIDLQTTILSRFDLIFIVKDVRMYDQDKRIASHIIKVHASGAAASSKNTDASEGENWLKRYIEYCRVTCKPRLSEKAAEMLQNKYVEIRQKMRQQAHETGRAAAIPITVRQLEAIIRLSESLAKMRLTSVATPEHVEEAFRLFNVSTVDAARSGINEHLNLSPDIANEIKQAEAQIKRRMGIGSHISERRLIDELNRMGMNESIVRRALLIMHQRDEVEYKRERHVIVRKA.

Positions 326-532 (AYVKICSMIG…DQDKRIASHI (207 aa)) constitute an MCM domain. 376-383 (GDPSTAKS) provides a ligand contact to ATP. Positions 508-511 (SRFD) match the Arginine finger motif.

This sequence belongs to the MCM family. Component of the minichromosome maintenance (MCM) complex, a heterotetramer composed of MCM2, MCM3, MCM4, MCM5, MCM6 and MCM7.

It is found in the nucleus. It catalyses the reaction ATP + H2O = ADP + phosphate + H(+). Functionally, probable component of the MCM2-7 complex (MCM complex) that may function as a DNA helicase and which is essential to undergo a single round of replication initiation and elongation per cell cycle in eukaryotic cells. The chain is DNA replication licensing factor MCM5 (MCM5) from Oryza sativa subsp. indica (Rice).